A 313-amino-acid chain; its full sequence is 2-dehydro-3-deoxygluconokinase/2-dehydro-3-deoxygalactonokinase (313 aa).

Residues 34-38, tyrosine 90, 106-108, and arginine 166 each bind substrate; these read GSELN and YYR. ATP-binding positions include 164–166, 226–231, and 255–258; these read NIR, KLGSKG, and GAGD. 2 residues coordinate substrate: aspartate 258 and aspartate 294. Aspartate 258 serves as the catalytic Proton acceptor.

In terms of assembly, homohexamer; trimer of dimers.

The catalysed reaction is 2-dehydro-3-deoxy-D-gluconate + ATP = 2-dehydro-3-deoxy-6-phospho-D-gluconate + ADP + H(+). The enzyme catalyses 2-dehydro-3-deoxy-D-galactonate + ATP = 2-dehydro-3-deoxy-6-phospho-D-galactonate + ADP + H(+). The protein operates within carbohydrate acid metabolism; 2-dehydro-3-deoxy-D-gluconate degradation; D-glyceraldehyde 3-phosphate and pyruvate from 2-dehydro-3-deoxy-D-gluconate: step 1/2. Functionally, involved in the degradation of glucose and galactose via the semi-phosphorylative Entner-Doudoroff pathway. Catalyzes the phosphorylation of 2-keto-3-deoxygluconate (KDG) and 2-keto-3-deoxygalactonate (KDGal) to produce 2-keto-3-deoxy-6-phosphogluconate (KDPG) and 2-keto-3-deoxy-6-phosphogalactonate (KDPGal), respectively. The chain is 2-dehydro-3-deoxygluconokinase/2-dehydro-3-deoxygalactonokinase (kdgK) from Saccharolobus solfataricus (strain ATCC 35092 / DSM 1617 / JCM 11322 / P2) (Sulfolobus solfataricus).